The sequence spans 309 residues: GTP cyclohydrolase MptA (309 aa).

Belongs to the GTP cyclohydrolase IV family. In terms of assembly, homodimer. Requires Fe(2+) as cofactor.

It catalyses the reaction GTP + H2O = 7,8-dihydroneopterin 2',3'-cyclic phosphate + formate + diphosphate + H(+). It participates in cofactor biosynthesis; 5,6,7,8-tetrahydromethanopterin biosynthesis. Functionally, converts GTP to 7,8-dihydro-D-neopterin 2',3'-cyclic phosphate, the first intermediate in the biosynthesis of coenzyme methanopterin. The protein is GTP cyclohydrolase MptA of Haloarcula marismortui (strain ATCC 43049 / DSM 3752 / JCM 8966 / VKM B-1809) (Halobacterium marismortui).